A 492-amino-acid chain; its full sequence is Trigger factor (492 aa).

The tract at residues 77–96 (EILSSRGEKSATQPAISMTE) is disordered. Positions 169 to 254 (GDRVTMNYLG…VKEVAAAAAV (86 aa)) constitute a PPIase FKBP-type domain. The interval 439-492 (ELLADDGEEETETKKKAPAKKKAAAKADDAAEGEEAAPKKKAPAKKKATEADAE) is disordered.

Belongs to the FKBP-type PPIase family. Tig subfamily.

The protein localises to the cytoplasm. The enzyme catalyses [protein]-peptidylproline (omega=180) = [protein]-peptidylproline (omega=0). In terms of biological role, involved in protein export. Acts as a chaperone by maintaining the newly synthesized protein in an open conformation. Functions as a peptidyl-prolyl cis-trans isomerase. This is Trigger factor from Agrobacterium fabrum (strain C58 / ATCC 33970) (Agrobacterium tumefaciens (strain C58)).